The chain runs to 99 residues: Acylphosphatase-2 (99 aa).

Serine 2 bears the N-acetylserine mark. The region spanning 9–99 (SVDYEVFGRV…LEYSSFNIRY (91 aa)) is the Acylphosphatase-like domain. Catalysis depends on residues arginine 24 and asparagine 42. Serine 93 bears the Phosphoserine mark.

Belongs to the acylphosphatase family.

It carries out the reaction an acyl phosphate + H2O = a carboxylate + phosphate + H(+). Its physiological role is not yet clear. The polypeptide is Acylphosphatase-2 (ACYP2) (Bos taurus (Bovine)).